An 84-amino-acid chain; its full sequence is Cell division topological specificity factor (84 aa).

Belongs to the MinE family.

Its function is as follows. Prevents the cell division inhibition by proteins MinC and MinD at internal division sites while permitting inhibition at polar sites. This ensures cell division at the proper site by restricting the formation of a division septum at the midpoint of the long axis of the cell. The protein is Cell division topological specificity factor of Cupriavidus pinatubonensis (strain JMP 134 / LMG 1197) (Cupriavidus necator (strain JMP 134)).